The primary structure comprises 505 residues: Maturase K (505 aa).

The protein belongs to the intron maturase 2 family. MatK subfamily.

The protein localises to the plastid. It localises to the chloroplast. Its function is as follows. Usually encoded in the trnK tRNA gene intron. Probably assists in splicing its own and other chloroplast group II introns. The sequence is that of Maturase K from Chiococca alba (West Indian milkberry).